The sequence spans 782 residues: E3 UFM1-protein ligase 1 homolog (782 aa).

A disordered region spans residues 405–478 (VSTQELEDDG…TRGGGGASKK (74 aa)).

Belongs to the UFL1 family.

In terms of biological role, E3 UFM1-protein ligase that mediates ufmylation of target proteins. This Drosophila simulans (Fruit fly) protein is E3 UFM1-protein ligase 1 homolog.